Here is a 552-residue protein sequence, read N- to C-terminus: CTP synthase (552 aa).

The amidoligase domain stretch occupies residues 1–267 (MAKFIFVTGG…AEQTLKLLRM (267 aa)). Residue Ser-13 participates in CTP binding. Ser-13 serves as a coordination point for UTP. Residues 14–19 (SIGKGI) and Asp-71 contribute to the ATP site. 2 residues coordinate Mg(2+): Asp-71 and Glu-141. Residues 148-150 (DIE), 188-193 (KTKPTQ), and Lys-224 contribute to the CTP site. UTP is bound by residues 188 to 193 (KTKPTQ) and Lys-224. Residues 292-534 (DIAIVGKYVQ…IQAAGNHKSQ (243 aa)) enclose the Glutamine amidotransferase type-1 domain. Gly-354 is an L-glutamine binding site. The active-site Nucleophile; for glutamine hydrolysis is the Cys-381. L-glutamine contacts are provided by residues 382–385 (LGMQ), Glu-405, and Arg-462. Active-site residues include His-507 and Glu-509. The segment at 533–552 (SQPISDELDNQSTEMSISLS) is disordered.

The protein belongs to the CTP synthase family. Homotetramer.

The catalysed reaction is UTP + L-glutamine + ATP + H2O = CTP + L-glutamate + ADP + phosphate + 2 H(+). It catalyses the reaction L-glutamine + H2O = L-glutamate + NH4(+). It carries out the reaction UTP + NH4(+) + ATP = CTP + ADP + phosphate + 2 H(+). It participates in pyrimidine metabolism; CTP biosynthesis via de novo pathway; CTP from UDP: step 2/2. Its activity is regulated as follows. Allosterically activated by GTP, when glutamine is the substrate; GTP has no effect on the reaction when ammonia is the substrate. The allosteric effector GTP functions by stabilizing the protein conformation that binds the tetrahedral intermediate(s) formed during glutamine hydrolysis. Inhibited by the product CTP, via allosteric rather than competitive inhibition. Functionally, catalyzes the ATP-dependent amination of UTP to CTP with either L-glutamine or ammonia as the source of nitrogen. Regulates intracellular CTP levels through interactions with the four ribonucleotide triphosphates. The chain is CTP synthase from Picosynechococcus sp. (strain ATCC 27264 / PCC 7002 / PR-6) (Agmenellum quadruplicatum).